The following is a 199-amino-acid chain: Peptidyl-tRNA hydrolase (199 aa).

Tyr15 provides a ligand contact to tRNA. The active-site Proton acceptor is His20. Residues Tyr66, Asn68, and Asn114 each contribute to the tRNA site.

Belongs to the PTH family. As to quaternary structure, monomer.

It localises to the cytoplasm. The catalysed reaction is an N-acyl-L-alpha-aminoacyl-tRNA + H2O = an N-acyl-L-amino acid + a tRNA + H(+). In terms of biological role, hydrolyzes ribosome-free peptidyl-tRNAs (with 1 or more amino acids incorporated), which drop off the ribosome during protein synthesis, or as a result of ribosome stalling. Functionally, catalyzes the release of premature peptidyl moieties from peptidyl-tRNA molecules trapped in stalled 50S ribosomal subunits, and thus maintains levels of free tRNAs and 50S ribosomes. This Burkholderia multivorans (strain ATCC 17616 / 249) protein is Peptidyl-tRNA hydrolase.